Consider the following 177-residue polypeptide: Large ribosomal subunit protein uL6 (177 aa).

The protein belongs to the universal ribosomal protein uL6 family. In terms of assembly, part of the 50S ribosomal subunit.

This protein binds to the 23S rRNA, and is important in its secondary structure. It is located near the subunit interface in the base of the L7/L12 stalk, and near the tRNA binding site of the peptidyltransferase center. In Yersinia enterocolitica serotype O:8 / biotype 1B (strain NCTC 13174 / 8081), this protein is Large ribosomal subunit protein uL6.